The primary structure comprises 371 residues: Carlactonoate CLA methyltransferase (371 aa).

Y21 contributes to the S-adenosyl-L-homocysteine binding site. Q28 lines the (11R)-carlactonoate pocket. S-adenosyl-L-homocysteine contacts are provided by C62, N67, D101, L102, S141, and F142. Residues H162 and W163 each coordinate (11R)-carlactonoate. N180, D266, Y268, and D269 together coordinate Mg(2+).

The protein belongs to the methyltransferase superfamily. Type-7 methyltransferase family. SABATH subfamily. As to quaternary structure, homodimer. Mg(2+) is required as a cofactor.

The enzyme catalyses (11R)-carlactonoate + S-adenosyl-L-methionine = (11R)-methyl carlactonoate + S-adenosyl-L-homocysteine. Functionally, methyltransferase involved in the biosynthesis of strigolactone natural products, bioactive compounds promoting plant fitness and soil microbe interactions, but preventing shoot branching. Catalyzes the biosynthesis of (11R)-methyl carlactonoate (MeCLA) from (11R)-carlactonoate (CLA), downstream of MAX1; MeCLA is probably biologically active as a hormone regulating shoot branching and serves as a precursor of non-canonical strigolactones (SLs). The sequence is that of Carlactonoate CLA methyltransferase from Arabidopsis thaliana (Mouse-ear cress).